The chain runs to 176 residues: Large ribosomal subunit protein eL20 (176 aa).

Residue K11 forms a Glycyl lysine isopeptide (Lys-Gly) (interchain with G-Cter in SUMO2) linkage. At Y63 the chain carries Phosphotyrosine. Position 71 is a phosphoserine (S71). At K76 the chain carries N6-succinyllysine. S123 bears the Phosphoserine mark. Glycyl lysine isopeptide (Lys-Gly) (interchain with G-Cter in SUMO2) cross-links involve residues K128 and K170.

It belongs to the eukaryotic ribosomal protein eL20 family. In terms of assembly, component of the large ribosomal subunit. Binds IPO9 with high affinity.

The protein localises to the cytoplasm. In terms of biological role, component of the large ribosomal subunit. The ribosome is a large ribonucleoprotein complex responsible for the synthesis of proteins in the cell. The protein is Large ribosomal subunit protein eL20 (RPL18A) of Oryctolagus cuniculus (Rabbit).